Reading from the N-terminus, the 252-residue chain is Trans-aconitate 2-methyltransferase (252 aa).

Belongs to the methyltransferase superfamily. Tam family.

The protein resides in the cytoplasm. The enzyme catalyses trans-aconitate + S-adenosyl-L-methionine = (E)-3-(methoxycarbonyl)pent-2-enedioate + S-adenosyl-L-homocysteine. In terms of biological role, catalyzes the S-adenosylmethionine monomethyl esterification of trans-aconitate. The protein is Trans-aconitate 2-methyltransferase of Escherichia coli O1:K1 / APEC.